Consider the following 331-residue polypeptide: Putative heme-binding peroxidase (331 aa).

The Proton acceptor role is filled by histidine 50. Histidine 174 contributes to the heme b binding site. Tryptophan 190 functions as the Tryptophan radical intermediate in the catalytic mechanism. The segment at 288–331 (INTDNQKGGYRSAPKKSDSTPATSGQPGASKTGGCPVMHHKAKL) is disordered. The span at 306–316 (STPATSGQPGA) shows a compositional bias: polar residues.

This sequence belongs to the peroxidase family. Cytochrome c peroxidase subfamily. Requires heme b as cofactor.

In terms of biological role, destroys radicals which are normally produced within the cells and which are toxic to biological systems. This Gibberella zeae (strain ATCC MYA-4620 / CBS 123657 / FGSC 9075 / NRRL 31084 / PH-1) (Wheat head blight fungus) protein is Putative heme-binding peroxidase.